We begin with the raw amino-acid sequence, 147 residues long: Small ribosomal subunit protein uS12 (147 aa).

The protein belongs to the universal ribosomal protein uS12 family. In terms of assembly, part of the 30S ribosomal subunit.

In terms of biological role, with S4 and S5 plays an important role in translational accuracy. Located at the interface of the 30S and 50S subunits. In Pyrococcus abyssi (strain GE5 / Orsay), this protein is Small ribosomal subunit protein uS12.